The chain runs to 209 residues: TVP38/TMEM64 family membrane protein slr0305 (209 aa).

The next 5 membrane-spanning stretches (helical) occupy residues leucine 15 to leucine 35, isoleucine 39 to isoleucine 59, leucine 110 to leucine 130, valine 134 to alanine 154, and leucine 171 to threonine 191.

The protein belongs to the TVP38/TMEM64 family.

The protein resides in the cell membrane. This Synechocystis sp. (strain ATCC 27184 / PCC 6803 / Kazusa) protein is TVP38/TMEM64 family membrane protein slr0305.